Reading from the N-terminus, the 545-residue chain is T-complex protein 1 subunit gamma (545 aa).

At M1 the chain carries N-acetylmethionine. Positions 1–24 are disordered; the sequence is MMGHRPVLVLSQNTKRESGRKVQS. A Phosphoserine modification is found at S11. A Glycyl lysine isopeptide (Lys-Gly) (interchain with G-Cter in SUMO2) cross-link involves residue K15. Residues G42, G94, T95, T96, S97, T162, and K163 each coordinate ADP. ATP-binding residues include G42, G94, T95, and T96. S170 is subject to Phosphoserine. K222 carries the post-translational modification N6-acetyllysine. Phosphoserine occurs at positions 243 and 244. Phosphotyrosine is present on Y247. Residues K248 and K249 each participate in a glycyl lysine isopeptide (Lys-Gly) (interchain with G-Cter in SUMO2) cross-link. At S252 the chain carries Phosphoserine. A disulfide bridge links C366 with C372. Residue K381 forms a Glycyl lysine isopeptide (Lys-Gly) (interchain with G-Cter in SUMO2) linkage. Residue G411 participates in ADP binding. G411 contributes to the ATP binding site. T430 and T459 each carry phosphothreonine. 4 residues coordinate ADP: G482, E483, E497, and K502. G482 serves as a coordination point for ATP. E497 provides a ligand contact to ATP. The interval 526–545 is disordered; the sequence is HKKKGDDQSRQGGAPDAGQE.

The protein belongs to the TCP-1 chaperonin family. In terms of assembly, component of the chaperonin-containing T-complex (TRiC), a hexadecamer composed of two identical back-to-back stacked rings enclosing a protein folding chamber. Each ring is made up of eight different subunits: TCP1/CCT1, CCT2, CCT3, CCT4, CCT5, CCT6A/CCT6, CCT7, CCT8. Interacts with PACRG. Interacts with DNAAF4. Interacts with DLEC1.

It localises to the cytoplasm. It catalyses the reaction ATP + H2O = ADP + phosphate + H(+). In terms of biological role, component of the chaperonin-containing T-complex (TRiC), a molecular chaperone complex that assists the folding of actin, tubulin and other proteins upon ATP hydrolysis. The TRiC complex mediates the folding of WRAP53/TCAB1, thereby regulating telomere maintenance. As part of the TRiC complex may play a role in the assembly of BBSome, a complex involved in ciliogenesis regulating transports vesicles to the cilia. This is T-complex protein 1 subunit gamma (CCT3) from Macaca fascicularis (Crab-eating macaque).